The sequence spans 475 residues: Crocetin glucosyltransferase 3 (475 aa).

Residue His16 is the Proton acceptor of the active site. His16 contributes to the an anthocyanidin binding site. Asp123 acts as the Charge relay in catalysis. UDP-alpha-D-glucose is bound by residues Thr144, Ala354, Gln356, His371, Trp374, Asn375, Ser376, and Glu379. Ala394 is an an anthocyanidin binding site. Glu395 and Gln396 together coordinate UDP-alpha-D-glucose.

This sequence belongs to the UDP-glycosyltransferase family. As to expression, mainly expressed in stamens.

It carries out the reaction crocetin + UDP-alpha-D-glucose = beta-D-glucosyl crocetin + UDP. It catalyses the reaction beta-D-glucosyl crocetin + UDP-alpha-D-glucose = bis(beta-D-glucosyl) crocetin + UDP. The enzyme catalyses beta-D-gentiobiosyl crocetin + UDP-alpha-D-glucose = beta-D-gentiobiosyl beta-D-glucosyl crocetin + UDP. Functionally, crocetin glucosyltransferase involved in the synthesis of crocin, one of the apocarotenoids responsible for the color and bitter taste of saffron. This Crocus sativus (Saffron) protein is Crocetin glucosyltransferase 3 (GLT3).